The sequence spans 1101 residues: Cytospin-A (1101 aa).

2 disordered regions span residues Met-1–Ser-170 and Ser-280–Ala-366. Composition is skewed to polar residues over residues Glu-29–Ala-48 and Ala-64–Ser-86. Residues Arg-93–Ala-110 are compositionally biased toward low complexity. Composition is skewed to basic and acidic residues over residues Gly-114 to Arg-125 and Gly-151 to Ser-165. Residues Lys-162–Phe-254 are a coiled coil. Residues Leu-333–Thr-355 are compositionally biased toward low complexity. Coiled coils occupy residues Cys-373 to Leu-427 and Gln-492 to Val-785. The disordered stretch occupies residues Ser-923 to Ile-978. Residues Arg-929–Ser-939 are compositionally biased toward basic and acidic residues. Residues Thr-953–Arg-975 are compositionally biased toward low complexity. The Calponin-homology (CH) domain occupies Gly-995 to Glu-1100.

The protein belongs to the cytospin-A family. May interact with both microtubules and actin cytoskeleton.

It localises to the cytoplasm. It is found in the cytoskeleton. The protein localises to the spindle. Its subcellular location is the cell junction. The protein resides in the gap junction. In terms of biological role, involved in cytokinesis and spindle organization. May play a role in actin cytoskeleton organization and microtubule stabilization and hence required for proper cell adhesion and migration. The chain is Cytospin-A (specc1l) from Xenopus tropicalis (Western clawed frog).